A 273-amino-acid chain; its full sequence is Beta-lactamase OXA-133 (273 aa).

The signal sequence occupies residues 1-17 (MNKYFTCYVVASLFFSG). Cys18 is lipidated: N-palmitoyl cysteine. Cys18 carries S-diacylglycerol cysteine lipidation. Ser79 acts as the Acyl-ester intermediate in catalysis. At Lys82 the chain carries N6-carboxylysine. A substrate-binding site is contributed by 216–218 (KTG).

The protein belongs to the class-D beta-lactamase family.

Its subcellular location is the cell membrane. It catalyses the reaction a beta-lactam + H2O = a substituted beta-amino acid. Its function is as follows. Catalyzes the hydrolysis of beta-lactam antibiotics. This Acinetobacter radioresistens protein is Beta-lactamase OXA-133.